Consider the following 562-residue polypeptide: NAD-dependent malic enzyme (562 aa).

Tyrosine 101 acts as the Proton donor in catalysis. Position 154 (arginine 154) interacts with NAD(+). The Proton acceptor role is filled by lysine 172. Residues glutamate 243, aspartate 244, and aspartate 267 each contribute to the a divalent metal cation site. The NAD(+) site is built by aspartate 267 and asparagine 415.

The protein belongs to the malic enzymes family. Homotetramer. The cofactor is Mg(2+). It depends on Mn(2+) as a cofactor.

The catalysed reaction is (S)-malate + NAD(+) = pyruvate + CO2 + NADH. The enzyme catalyses oxaloacetate + H(+) = pyruvate + CO2. In Shewanella halifaxensis (strain HAW-EB4), this protein is NAD-dependent malic enzyme.